The chain runs to 181 residues: Neuroblastoma suppressor of tumorigenicity 1 (181 aa).

Positions 1–16 are cleaved as a signal peptide; the sequence is MMLRVLVGAVLPAMLL. 5 cysteine pairs are disulfide-bonded: C35/C85, C49/C99, C59/C118, C63/C120, and C82/C123. The CTCK domain occupies 35 to 124; the sequence is CEAKNITQIV…ILHCSCQACG (90 aa). The tract at residues 132–181 is disordered; sequence LSVYVQGEDGPGSQPGTHPHPHPHPHPGGQTPEPEDPPGAPHTEEEGAED.

Belongs to the DAN family. In terms of assembly, homodimer. As to expression, most abundant in normal lung and meningioma.

It is found in the secreted. Functionally, possible candidate as a tumor suppressor gene of neuroblastoma. May play an important role in preventing cells from entering the final stage (G1/S) of the transformation process. This chain is Neuroblastoma suppressor of tumorigenicity 1 (NBL1), found in Homo sapiens (Human).